The primary structure comprises 496 residues: MFFRPDFRPRCAKWLIATGLFLMLGACVEKPTTLERVKEDGVLRMITRNSPATYFQDRNGETGFEYELVKRFADDLGVELKIETADNLDDLFDQMNKPGGPVLGAAGLIETPKRKQQARFSHSYLEVTPQVVYRNGQSRPTDPGDLVGKRIVVLKGSAHAEQLAALKAQNPGLEYEESDAVEVVDLLRMVDEGQIDLTLVDSNELAMNQVYFPNVRVAFDLGEAREQRWVVAPGEDNSLLNEINAYLDKVEKNGTLQRLKDRYYGHVDVLGYVGAYTFAQHLQERLPKYEKHFQTSAKKEQVDWRLLAAIGYQESMWQPAVTSKTGVRGLMMLTQNTAQAMGVTNRLDARQSIQGGAKYFAYVKDQLDDSIKEPDRTWLALASYNIGSGHLEDARKLAQNEGLNPDKWLDVKKMLPRLAQKKWYSKTRYGYARGGEPVHFVANIRRYYDILTWVTQPQLEGSQVADGNLHVPGVDKTQPPAPPAPASGSSPDKPAL.

The signal sequence occupies residues 1–29; the sequence is MFFRPDFRPRCAKWLIATGLFLMLGACVE. Residues 30 to 267 form a non-LT domain region; sequence KPTTLERVKE…RLKDRYYGHV (238 aa). The tract at residues 268–496 is LT domain; the sequence is DVLGYVGAYT…SGSSPDKPAL (229 aa). Glu-314 is a catalytic residue. The segment at 464–496 is disordered; the sequence is VADGNLHVPGVDKTQPPAPPAPASGSSPDKPAL. Low complexity predominate over residues 486 to 496; that stretch reads ASGSSPDKPAL.

This sequence in the N-terminal section; belongs to the bacterial solute-binding protein 3 family. In the C-terminal section; belongs to the transglycosylase Slt family.

It localises to the cell outer membrane. It carries out the reaction Exolytic cleavage of the (1-&gt;4)-beta-glycosidic linkage between N-acetylmuramic acid (MurNAc) and N-acetylglucosamine (GlcNAc) residues in peptidoglycan, from either the reducing or the non-reducing ends of the peptidoglycan chains, with concomitant formation of a 1,6-anhydrobond in the MurNAc residue.. Murein-degrading enzyme that degrades murein glycan strands and insoluble, high-molecular weight murein sacculi, with the concomitant formation of a 1,6-anhydromuramoyl product. Lytic transglycosylases (LTs) play an integral role in the metabolism of the peptidoglycan (PG) sacculus. Their lytic action creates space within the PG sacculus to allow for its expansion as well as for the insertion of various structures such as secretion systems and flagella. The chain is Membrane-bound lytic murein transglycosylase F from Pseudomonas savastanoi pv. phaseolicola (strain 1448A / Race 6) (Pseudomonas syringae pv. phaseolicola (strain 1448A / Race 6)).